Here is a 929-residue protein sequence, read N- to C-terminus: Collagen alpha-1(XII) chain (929 aa).

The VWFA 1 domain occupies 1–49 (DVEIFAVGVKDAVRSELEAIATPPTATHVYTVEDFDAFQRISFELTQSI). Fibronectin type-III domains follow at residues 67–156 (PPRD…LEVR), 158–250 (APRN…VGEP), 251–340 (KNLR…LQER), 342–432 (SPRD…ASPD), 434–521 (KIVK…LSPF), and 523–613 (APRS…TLRD). N98 carries N-linked (GlcNAc...) asparagine glycosylation. Residues S231, S324, and S415 are each glycosylated (O-linked (Xyl...) (chondroitin sulfate) serine). The region spanning 633 to 805 (DIVLLVDGSW…SLLTNIVNDL (173 aa)) is the VWFA 2 domain. Residues 821 to 910 (PPSNLVTSEP…AGTETTLPIP (90 aa)) form the Fibronectin type-III 7 domain.

The protein belongs to the fibril-associated collagens with interrupted helices (FACIT) family. As to quaternary structure, trimer of identical chains each containing 190 kDa of non-triple-helical sequences. In terms of processing, the triple-helical tail is stabilized by disulfide bonds at each end. Prolines at the third position of the tripeptide repeating unit (G-X-Y) are hydroxylated in some or all of the chains.

It localises to the secreted. The protein localises to the extracellular space. The protein resides in the extracellular matrix. Functionally, type XII collagen interacts with type I collagen-containing fibrils, the COL1 domain could be associated with the surface of the fibrils, and the COL2 and NC3 domains may be localized in the perifibrillar matrix. Could play a developmental role in regeneration. In Notophthalmus viridescens (Eastern newt), this protein is Collagen alpha-1(XII) chain.